Here is a 379-residue protein sequence, read N- to C-terminus: 8-amino-7-oxononanoate synthase (379 aa).

Substrate is bound by residues Arg-27 and Arg-34. Pyridoxal 5'-phosphate is bound at residue 114–115 (GY). His-139 contributes to the substrate binding site. Residues Ser-187, 212–215 (DDAH), and 232–235 (TLSK) contribute to the pyridoxal 5'-phosphate site. Position 235 is an N6-(pyridoxal phosphate)lysine (Lys-235). Residue Thr-344 participates in substrate binding.

The protein belongs to the class-II pyridoxal-phosphate-dependent aminotransferase family. BioF subfamily. As to quaternary structure, homodimer. Requires pyridoxal 5'-phosphate as cofactor.

It catalyses the reaction 6-carboxyhexanoyl-[ACP] + L-alanine + H(+) = (8S)-8-amino-7-oxononanoate + holo-[ACP] + CO2. It participates in cofactor biosynthesis; biotin biosynthesis. In terms of biological role, catalyzes the decarboxylative condensation of pimeloyl-[acyl-carrier protein] and L-alanine to produce 8-amino-7-oxononanoate (AON), [acyl-carrier protein], and carbon dioxide. The protein is 8-amino-7-oxononanoate synthase of Methylobacterium sp. (strain 4-46).